Consider the following 334-residue polypeptide: Transaldolase (334 aa).

The active-site Schiff-base intermediate with substrate is Lys-136.

This sequence belongs to the transaldolase family. Type 1 subfamily. In terms of assembly, homodimer.

The protein resides in the cytoplasm. It carries out the reaction D-sedoheptulose 7-phosphate + D-glyceraldehyde 3-phosphate = D-erythrose 4-phosphate + beta-D-fructose 6-phosphate. It functions in the pathway carbohydrate degradation; pentose phosphate pathway; D-glyceraldehyde 3-phosphate and beta-D-fructose 6-phosphate from D-ribose 5-phosphate and D-xylulose 5-phosphate (non-oxidative stage): step 2/3. Its function is as follows. Transaldolase is important for the balance of metabolites in the pentose-phosphate pathway. This is Transaldolase from Nostoc punctiforme (strain ATCC 29133 / PCC 73102).